The sequence spans 279 residues: Probable endonuclease 4 (279 aa).

Residues histidine 69, histidine 109, glutamate 145, aspartate 179, histidine 182, histidine 216, aspartate 229, histidine 231, and glutamate 261 each contribute to the Zn(2+) site.

It belongs to the AP endonuclease 2 family. Requires Zn(2+) as cofactor.

It carries out the reaction Endonucleolytic cleavage to 5'-phosphooligonucleotide end-products.. Endonuclease IV plays a role in DNA repair. It cleaves phosphodiester bonds at apurinic or apyrimidinic (AP) sites, generating a 3'-hydroxyl group and a 5'-terminal sugar phosphate. The protein is Probable endonuclease 4 of Desulforapulum autotrophicum (strain ATCC 43914 / DSM 3382 / VKM B-1955 / HRM2) (Desulfobacterium autotrophicum).